A 380-amino-acid polypeptide reads, in one-letter code: WAT1-related protein At2g37460 (380 aa).

Transmembrane regions (helical) follow at residues 16–36, 45–65, 71–91, 107–127, 142–162, 187–207, 216–236, 254–274, 282–302, and 306–326; these read FISM…SKAV, VLVV…AFYF, PKMT…EPVI, FATA…YIFG, VVGT…KGPV, GAVL…LQAI, LSLT…VALV, LTAT…GGVV, FVTA…TIIF, and MYLG…LVIW. In terms of domain architecture, EamA 1 spans 27–134; it reads AGMDILSKAV…IFGLERVKLR (108 aa). Residues 196–325 enclose the EamA 2 domain; sequence FSYACFMILQ…VICAGLYLVI (130 aa).

Belongs to the drug/metabolite transporter (DMT) superfamily. Plant drug/metabolite exporter (P-DME) (TC 2.A.7.4) family.

The protein localises to the membrane. This chain is WAT1-related protein At2g37460, found in Arabidopsis thaliana (Mouse-ear cress).